A 361-amino-acid polypeptide reads, in one-letter code: Alanine racemase (361 aa).

Lys-35 serves as the catalytic Proton acceptor; specific for D-alanine. N6-(pyridoxal phosphate)lysine is present on Lys-35. Position 132 (Arg-132) interacts with substrate. Residue Tyr-257 is the Proton acceptor; specific for L-alanine of the active site. Position 305 (Met-305) interacts with substrate.

The protein belongs to the alanine racemase family. The cofactor is pyridoxal 5'-phosphate.

It catalyses the reaction L-alanine = D-alanine. The protein operates within amino-acid biosynthesis; D-alanine biosynthesis; D-alanine from L-alanine: step 1/1. Functionally, catalyzes the interconversion of L-alanine and D-alanine. May also act on other amino acids. The chain is Alanine racemase (alr) from Thioalkalivibrio sulfidiphilus (strain HL-EbGR7).